The sequence spans 131 residues: Small ribosomal subunit protein uS8 (131 aa).

The protein belongs to the universal ribosomal protein uS8 family. As to quaternary structure, part of the 30S ribosomal subunit. Contacts proteins S5 and S12.

Its function is as follows. One of the primary rRNA binding proteins, it binds directly to 16S rRNA central domain where it helps coordinate assembly of the platform of the 30S subunit. The sequence is that of Small ribosomal subunit protein uS8 from Pelagibacter ubique (strain HTCC1062).